Consider the following 238-residue polypeptide: Protein shisa-3 homolog (238 aa).

An N-terminal signal peptide occupies residues 1–21; the sequence is MGALLAFCLLVGLLRWGPAGA. The Lumenal segment spans residues 22–98; the sequence is QQPGEYCHGW…GITAQPVYVP (77 aa). A helical membrane pass occupies residues 99-119; it reads FLIVGSIFIAFIILGSLVAIY. The Cytoplasmic portion of the chain corresponds to 120-238; the sequence is CCTCLRPKEP…GKSCPDFSSS (119 aa).

Belongs to the shisa family.

It localises to the endoplasmic reticulum membrane. Functionally, plays an essential role in the maturation of presomitic mesoderm cells by individual attenuation of both FGF and WNT signaling. In Mus musculus (Mouse), this protein is Protein shisa-3 homolog (Shisa3).